We begin with the raw amino-acid sequence, 309 residues long: Metal ABC transporter substrate-binding lipoprotein SsaB (309 aa).

The N-terminal stretch at 1–19 is a signal peptide; that stretch reads MKKLGFLSLLLLAVCTLFA. A lipid anchor (N-palmitoyl cysteine) is attached at C20. C20 carries the S-diacylglycerol cysteine lipid modification. Positions 67, 139, 205, and 280 each coordinate a divalent metal cation.

This sequence belongs to the bacterial solute-binding protein 9 family. Lipoprotein receptor antigen (Lrai) subfamily. As to quaternary structure, homodimer and homotrimer.

Its subcellular location is the cell membrane. Its function is as follows. Part of an ATP-binding cassette (ABC) transport system involved in metal import. Binds a metal with high affinity and specificity and delivers it to the membrane permease for translocation into the cytoplasm. Also acts as an adhesin which is involved on adherence to extracellular matrix. It is an important factor in the pathogenesis and infection. May contribute to the formation and accumulation of dental plaque. In Streptococcus sanguinis, this protein is Metal ABC transporter substrate-binding lipoprotein SsaB (ssaB).